We begin with the raw amino-acid sequence, 518 residues long: Reduced folate transporter (518 aa).

Position 1 is an N-acetylmethionine (M1). Residues M1–V29 lie on the Cytoplasmic side of the membrane. A helical transmembrane segment spans residues F30–P50. I48 and T49 together coordinate folate. The Extracellular portion of the chain corresponds to Y51–V62. Residue N56 is glycosylated (N-linked (GlcNAc...) asparagine). A helical transmembrane segment spans residues T63–T85. The Cytoplasmic portion of the chain corresponds to D86–R89. Residues Y90–L110 traverse the membrane as a helical segment. Residues G111–V114 lie on the Extracellular side of the membrane. The helical transmembrane segment at V115–Y137 threads the bilayer. Folate contacts are provided by E121 and R131. The Cytoplasmic segment spans residues I138 to A151. The chain crosses the membrane as a helical span at residues S152–E176. V162 serves as a coordination point for folate. Residues Q177 to N181 lie on the Extracellular side of the membrane. The chain crosses the membrane as a helical span at residues S182–S200. The Cytoplasmic portion of the chain corresponds to L201–Q266. The helical transmembrane segment at P267–V292 threads the bilayer. Residues A281, G282, and I286 each contribute to the folate site. Residues L293–L300 lie on the Extracellular side of the membrane. Residues N301–F323 traverse the membrane as a helical segment. Residues V324 to A329 are Cytoplasmic-facing. A helical membrane pass occupies residues L330–M350. The Extracellular segment spans residues Y351–V353. The helical transmembrane segment at H354–Q377 threads the bilayer. Folate-binding residues include Y366 and V370. Over F378–L391 the chain is Cytoplasmic. The chain crosses the membrane as a helical span at residues S392–T415. A required for substrate-binding region spans residues A407–S419. Over L416 to G423 the chain is Extracellular. A helical membrane pass occupies residues L424 to V448. The Cytoplasmic segment spans residues G449 to L512. Phosphoserine occurs at positions 473, 478, and 483. Positions Q480 to A518 are disordered.

The protein belongs to the reduced folate carrier (RFC) transporter (TC 2.A.48) family.

It is found in the cell membrane. The protein resides in the apical cell membrane. It localises to the basolateral cell membrane. It catalyses the reaction 5-amino-1-(5-phospho-beta-D-ribosyl)imidazole-4-carboxamide(in) + (6S)-5-methyl-5,6,7,8-tetrahydrofolate(out) = 5-amino-1-(5-phospho-beta-D-ribosyl)imidazole-4-carboxamide(out) + (6S)-5-methyl-5,6,7,8-tetrahydrofolate(in). Its function is as follows. Antiporter that mediates the import of reduced folates, driven by the export of organic anions. Also acts as an importer of immunoreactive cyclic dinucleotides, but with a lower transporter activity. Mechanistically, acts as a secondary active transporter, which exports intracellular organic anions down their concentration gradients to facilitate the uptake of its substrates. Has high affinity for N5-methyltetrahydrofolate, the predominant circulating form of folate. Also mediates the import of antifolate drug methotrexate. 5-amino-4-imidazolecarboxamide riboside (AICAR), when phosphorylated to AICAR monophosphate, can serve as an organic anion for antiporter activity. The polypeptide is Reduced folate transporter (Cricetulus griseus (Chinese hamster)).